The chain runs to 77 residues: Acyl carrier protein (77 aa).

The Carrier domain maps to 2 to 77; that stretch reads ADALERVTKI…DAVNYINSKQ (76 aa). Position 37 is an O-(pantetheine 4'-phosphoryl)serine (S37).

It belongs to the acyl carrier protein (ACP) family. 4'-phosphopantetheine is transferred from CoA to a specific serine of apo-ACP by AcpS. This modification is essential for activity because fatty acids are bound in thioester linkage to the sulfhydryl of the prosthetic group.

It is found in the cytoplasm. Its pathway is lipid metabolism; fatty acid biosynthesis. Its function is as follows. Carrier of the growing fatty acid chain in fatty acid biosynthesis. The sequence is that of Acyl carrier protein from Bacillus licheniformis (strain ATCC 14580 / DSM 13 / JCM 2505 / CCUG 7422 / NBRC 12200 / NCIMB 9375 / NCTC 10341 / NRRL NRS-1264 / Gibson 46).